A 316-amino-acid polypeptide reads, in one-letter code: Porphobilinogen deaminase (316 aa).

Residue Cys-245 is modified to S-(dipyrrolylmethanemethyl)cysteine.

Belongs to the HMBS family. As to quaternary structure, monomer. Dipyrromethane is required as a cofactor.

It catalyses the reaction 4 porphobilinogen + H2O = hydroxymethylbilane + 4 NH4(+). It functions in the pathway porphyrin-containing compound metabolism; protoporphyrin-IX biosynthesis; coproporphyrinogen-III from 5-aminolevulinate: step 2/4. Its pathway is porphyrin-containing compound metabolism; chlorophyll biosynthesis. Its function is as follows. Tetrapolymerization of the monopyrrole PBG into the hydroxymethylbilane pre-uroporphyrinogen in several discrete steps. The protein is Porphobilinogen deaminase of Prochlorococcus marinus (strain MIT 9515).